The chain runs to 2059 residues: DNA polymerase theta (2059 aa).

The tract at residues Asp25 to Val45 is disordered. Positions Gln30–Val45 are enriched in polar residues. Residues Pro243 to Asn416 enclose the Helicase ATP-binding domain. Ala256–Thr263 is an ATP binding site. The DEAH box motif lies at Asp357–His360. Residues Cys464 to Ile666 form the Helicase C-terminal domain. 4 disordered regions span residues Pro1052–Arg1073, Pro1168–Gly1190, Gln1204–Val1274, and Pro1330–Ser1372. The segment covering Glu1062–Asn1071 has biased composition (polar residues). Positions Lys1213–Val1274 are enriched in polar residues. Residues Arg1355–Asn1365 are compositionally biased toward basic and acidic residues.

This sequence belongs to the DNA polymerase type-A family. It depends on Mg(2+) as a cofactor. Post-translationally, in adult males, cleaved to produce a 100 kDa form. Expressed in ovaries (at protein level).

Its subcellular location is the nucleus. It catalyses the reaction DNA(n) + a 2'-deoxyribonucleoside 5'-triphosphate = DNA(n+1) + diphosphate. Its activity is regulated as follows. Resistant to aphidicolin, but sensitive to dideoxythymindine triphosphate (ddTTP) and N-ethyl malemide (NEM). In terms of biological role, multifunctional protein with both DNA polymerase and ATPase activities. Might have 3' to 5' exonuclease activity. Plays a role in different DNA repair pathways such as DNA strand cross-link repair and microhomology-mediated end-joining (MMEJ), an alternative non-homologous end-joining (NHEJ) machinery triggered in response to double-strand breaks. MMEJ is an error-prone repair pathway that produces deletions of sequences from the strand being repaired and promotes genomic rearrangements, such as telomere fusions. Utilizes short microhomologies present in partially and fully single-stranded DNA (ssDNA) as primers for DNA synthesis. Prefers poly(dA)/oligo(dT) as a template-primer. The ATPase activity is necessary during interstrand cross-link (ICL) repair and has a critical role in generating templated insertions during MMEJ. Necessary for processing DNA damage induced by oxygen and N-ethylation. In follicle cells, contributes to double-strand break repair at physiological rereplication forks necessary for survival of fertilized eggs. The sequence is that of DNA polymerase theta from Drosophila melanogaster (Fruit fly).